A 278-amino-acid chain; its full sequence is NAD kinase (278 aa).

Residue Asp67 is the Proton acceptor of the active site. NAD(+)-binding positions include Asp67 to Gly68, Arg72, Asn137 to Glu138, Lys148, Arg165, Asp167, Thr178 to Ser183, Ala202, and Gln237.

It belongs to the NAD kinase family. It depends on a divalent metal cation as a cofactor.

It is found in the cytoplasm. The enzyme catalyses NAD(+) + ATP = ADP + NADP(+) + H(+). Its function is as follows. Involved in the regulation of the intracellular balance of NAD and NADP, and is a key enzyme in the biosynthesis of NADP. Catalyzes specifically the phosphorylation on 2'-hydroxyl of the adenosine moiety of NAD to yield NADP. This Thermococcus kodakarensis (strain ATCC BAA-918 / JCM 12380 / KOD1) (Pyrococcus kodakaraensis (strain KOD1)) protein is NAD kinase.